The chain runs to 185 residues: GTP cyclohydrolase 1 (185 aa).

Zn(2+)-binding residues include C76, H79, and C147.

Belongs to the GTP cyclohydrolase I family. In terms of assembly, toroid-shaped homodecamer, composed of two pentamers of five dimers.

It catalyses the reaction GTP + H2O = 7,8-dihydroneopterin 3'-triphosphate + formate + H(+). Its pathway is cofactor biosynthesis; 7,8-dihydroneopterin triphosphate biosynthesis; 7,8-dihydroneopterin triphosphate from GTP: step 1/1. This Clostridium perfringens (strain ATCC 13124 / DSM 756 / JCM 1290 / NCIMB 6125 / NCTC 8237 / Type A) protein is GTP cyclohydrolase 1.